Consider the following 911-residue polypeptide: Translation initiation factor IF-2 (911 aa).

Composition is skewed to basic and acidic residues over residues 80-94 (LEEQ…EQQL) and 101-113 (RPER…RTEV). Disordered stretches follow at residues 80 to 142 (LEEQ…VSEP), 153 to 172 (VKSP…DVEG), and 195 to 309 (SSLG…KMRK). A compositionally biased stretch (basic and acidic residues) spans 214 to 256 (KEQADELKDEFDIKAKEGGKEREAGGESRKPVKKGSEETKKTT). A compositionally biased stretch (basic residues) spans 262-272 (AKKKKGKKKKK). Over residues 273 to 284 (PEVDEKTIEKNI) the composition is skewed to basic and acidic residues. Residues 286-300 (STISGMDDTSGSGSS) show a composition bias toward low complexity. The region spanning 408 to 578 (IRPPVVTIMG…LTEAEIRELK (171 aa)) is the tr-type G domain. Residues 417-424 (GHVDHGKT) are G1. GTP is bound at residue 417 to 424 (GHVDHGKT). Residues 442 to 446 (GITQH) are G2. A G3 region spans residues 464-467 (DTPG). GTP is bound by residues 464–468 (DTPGH) and 518–521 (NKID). Positions 518-521 (NKID) are G4. Residues 554–556 (SAK) form a G5 region.

Belongs to the TRAFAC class translation factor GTPase superfamily. Classic translation factor GTPase family. IF-2 subfamily.

The protein localises to the cytoplasm. In terms of biological role, one of the essential components for the initiation of protein synthesis. Protects formylmethionyl-tRNA from spontaneous hydrolysis and promotes its binding to the 30S ribosomal subunits. Also involved in the hydrolysis of GTP during the formation of the 70S ribosomal complex. The protein is Translation initiation factor IF-2 of Chlorobium phaeobacteroides (strain BS1).